The primary structure comprises 83 residues: Erabutoxin c (83 aa).

The signal sequence occupies residues M1 to T21. The interval C24–C38 is loop I. 4 disulfides stabilise this stretch: C24-C45, C38-C62, C64-C75, and C76-C81. The stretch between loop I and loop II stretch occupies residues S39–S44. Residues C45–C62 form a loop II region. The loop III stretch occupies residues C64–C75.

The protein belongs to the three-finger toxin family. Short-chain subfamily. Type I alpha-neurotoxin sub-subfamily. In terms of tissue distribution, expressed by the venom gland.

The protein resides in the secreted. Binds to muscle nicotinic acetylcholine receptor (nAChR) and inhibit acetylcholine from binding to the receptor, thereby impairing neuromuscular transmission. Binds to Torpedo marmorata nAChR (Kd=0.14 nM). The sequence is that of Erabutoxin c from Laticauda semifasciata (Black-banded sea krait).